Reading from the N-terminus, the 569-residue chain is Tetratricopeptide repeat protein 22 (569 aa).

TPR repeat units follow at residues 66–99 (PAVRHLLGAFAFYLEELDEARECFLEVAHEHPGN), 101–133 (NAWANLAHVYGRLGQEEEEEACAARLADLMGLA), 203–237 (ATLYIRLDGIFLELGSEEQKRLPAFNRTLALLRQV), 260–294 (KDTFSTTPMGVHDCGYSGTDPLDCFGKAIEIAKNQ), 295–328 (PPILNRLAKIFYFLGKQDMAIGTCNMALDVLRDP), 383–418 (FKAYLDIGQVYYYMGVDAVQELLAVDEAALNQALVF), and 432–465 (PELQLLRGKCLRIKGEDANAAACFKRAVELDDAG).

This is Tetratricopeptide repeat protein 22 (TTC22) from Homo sapiens (Human).